The sequence spans 1333 residues: Protein CLASP-1 (1333 aa).

An HEAT 1 repeat occupies 168 to 206 (LIPQLCRLTNDPNSEVRDASTNCLVDLMVFGGKSIIAKI). Over residues 269 to 305 (STTSFTSSARLSTPPRTNAPSLSPSPSTPSPLSLPAA) the composition is skewed to low complexity. The disordered stretch occupies residues 269-311 (STTSFTSSARLSTPPRTNAPSLSPSPSTPSPLSLPAANGRSRD). Residues 360-389 (SNSDVREKLETANSVLRNANEDWSKRANQL) are a coiled coil. Disordered stretches follow at residues 579–711 (QKML…HQTP) and 764–792 (TPPKETSPPASLYARGYGNGSNGSNNSSN). Residues 601-611 (NQKQPQQPQQN) are compositionally biased toward low complexity. Residues 612-644 (ISQKFLSQRSASALDNKSQVLSIAKPQQSNPSR) are compositionally biased toward polar residues. Low complexity-rich tracts occupy residues 657–669 (SSTSSSFSAVRSS) and 686–707 (TNFNNNNNNNNKSSSSSPSTST). Residues 1266-1304 (VAPCFVSAYDSTSSSVRKCAVFGLVALVQRVGMPRLETH) form an HEAT 2 repeat.

It belongs to the CLASP family.

It is found in the cytoplasm. It localises to the cytoskeleton. Its function is as follows. Microtubule plus-end tracking protein that promotes the stabilization of dynamic microtubules. In Caenorhabditis briggsae, this protein is Protein CLASP-1.